We begin with the raw amino-acid sequence, 394 residues long: Elongation factor Tu (394 aa).

The region spanning K10–E204 is the tr-type G domain. The G1 stretch occupies residues G19–T26. G19–T26 serves as a coordination point for GTP. T26 lines the Mg(2+) pocket. The G2 stretch occupies residues G60–N64. The G3 stretch occupies residues D81–G84. GTP-binding positions include D81–H85 and N136–D139. The tract at residues N136 to D139 is G4. A G5 region spans residues S174–L176.

It belongs to the TRAFAC class translation factor GTPase superfamily. Classic translation factor GTPase family. EF-Tu/EF-1A subfamily. As to quaternary structure, monomer.

It is found in the cytoplasm. The enzyme catalyses GTP + H2O = GDP + phosphate + H(+). Functionally, GTP hydrolase that promotes the GTP-dependent binding of aminoacyl-tRNA to the A-site of ribosomes during protein biosynthesis. The sequence is that of Elongation factor Tu from Actinobacillus pleuropneumoniae serotype 5b (strain L20).